A 119-amino-acid chain; its full sequence is Achromolysin (119 aa).

This sequence belongs to the peptidase M4 family. Ca(2+) serves as cofactor. It depends on Zn(2+) as a cofactor.

Its subcellular location is the secreted. Functionally, has staphylolytic activity. The sequence is that of Achromolysin from Achromobacter lyticus.